A 519-amino-acid chain; its full sequence is ATP synthase subunit alpha 1 (519 aa).

172–179 contacts ATP; that stretch reads GDRQTGKT.

It belongs to the ATPase alpha/beta chains family. In terms of assembly, F-type ATPases have 2 components, CF(1) - the catalytic core - and CF(0) - the membrane proton channel. CF(1) has five subunits: alpha(3), beta(3), gamma(1), delta(1), epsilon(1). CF(0) has three main subunits: a(1), b(2) and c(9-12). The alpha and beta chains form an alternating ring which encloses part of the gamma chain. CF(1) is attached to CF(0) by a central stalk formed by the gamma and epsilon chains, while a peripheral stalk is formed by the delta and b chains.

It is found in the cell inner membrane. It carries out the reaction ATP + H2O + 4 H(+)(in) = ADP + phosphate + 5 H(+)(out). Functionally, produces ATP from ADP in the presence of a proton gradient across the membrane. The alpha chain is a regulatory subunit. This chain is ATP synthase subunit alpha 1, found in Psychromonas ingrahamii (strain DSM 17664 / CCUG 51855 / 37).